Consider the following 116-residue polypeptide: Large ribosomal subunit protein bL20 (116 aa).

Belongs to the bacterial ribosomal protein bL20 family.

Binds directly to 23S ribosomal RNA and is necessary for the in vitro assembly process of the 50S ribosomal subunit. It is not involved in the protein synthesizing functions of that subunit. The polypeptide is Large ribosomal subunit protein bL20 (Desulfatibacillum aliphaticivorans).